Reading from the N-terminus, the 808-residue chain is Envelope glycoprotein B (808 aa).

The signal sequence occupies residues 1-19; the sequence is MVPNKHLLLIILSFSTACG. Residues 20–701 lie on the Virion surface side of the membrane; that stretch reads QTTPTTAVEK…TGILNFIKNP (682 aa). N-linked (GlcNAc...) asparagine; by host glycosylation occurs at Asn30. 5 disulfide bridges follow: Cys45–Cys498, Cys62–Cys454, Cys136–Cys201, Cys291–Cys338, and Cys520–Cys557. The segment at 101 to 107 is involved in fusion and/or binding to host membrane; that stretch reads IFNGWTR. Asn158 is a glycosylation site (N-linked (GlcNAc...) asparagine; by host). Positions 187-195 are involved in fusion and/or binding to host membrane; sequence GWLWGTYRT. N-linked (GlcNAc...) asparagine; by host glycosylation is found at Asn239, Asn251, Asn285, Asn331, Asn344, Asn355, Asn361, Asn532, Asn569, Asn587, and Asn598. 2 hydrophobic membrane proximal region regions span residues 647 to 699 and 658 to 698; these read FDNS…NFIK and IIQD…LNFI. The chain crosses the membrane as a helical span at residues 702–722; the sequence is LGGMFTFLLIGAVIILVILLV. Residues 723-808 are Intravirion-facing; it reads RRTNNMSQAP…KQISTEDKIV (86 aa).

The protein belongs to the herpesviridae glycoprotein B family. Homotrimer; disulfide-linked. Binds to heparan sulfate proteoglycans. Interacts with gH/gL heterodimer. A proteolytic cleavage by host furin generates two subunits that remain linked by disulfide bonds.

Its subcellular location is the virion membrane. The protein resides in the host cell membrane. It is found in the host endosome membrane. It localises to the host Golgi apparatus membrane. Functionally, envelope glycoprotein that forms spikes at the surface of virion envelope. Essential for the initial attachment to heparan sulfate moieties of the host cell surface proteoglycans. Involved in fusion of viral and cellular membranes leading to virus entry into the host cell. Following initial binding to its host receptors, membrane fusion is mediated by the fusion machinery composed at least of gB and the heterodimer gH/gL. May be involved in the fusion between the virion envelope and the outer nuclear membrane during virion egress. This Saimiriine herpesvirus 2 (strain 11) (SaHV-2) protein is Envelope glycoprotein B.